Reading from the N-terminus, the 246-residue chain is Biosynthetic peptidoglycan transglycosylase (246 aa).

A helical transmembrane segment spans residues 20–42 (SLRWVLAAPLLFAAASVLQVLAL).

Belongs to the glycosyltransferase 51 family.

The protein resides in the cell inner membrane. The enzyme catalyses [GlcNAc-(1-&gt;4)-Mur2Ac(oyl-L-Ala-gamma-D-Glu-L-Lys-D-Ala-D-Ala)](n)-di-trans,octa-cis-undecaprenyl diphosphate + beta-D-GlcNAc-(1-&gt;4)-Mur2Ac(oyl-L-Ala-gamma-D-Glu-L-Lys-D-Ala-D-Ala)-di-trans,octa-cis-undecaprenyl diphosphate = [GlcNAc-(1-&gt;4)-Mur2Ac(oyl-L-Ala-gamma-D-Glu-L-Lys-D-Ala-D-Ala)](n+1)-di-trans,octa-cis-undecaprenyl diphosphate + di-trans,octa-cis-undecaprenyl diphosphate + H(+). The protein operates within cell wall biogenesis; peptidoglycan biosynthesis. Functionally, peptidoglycan polymerase that catalyzes glycan chain elongation from lipid-linked precursors. The polypeptide is Biosynthetic peptidoglycan transglycosylase (Xanthomonas campestris pv. campestris (strain 8004)).